The following is a 310-amino-acid chain: Putative dihydroorotate dehydrogenase A (fumarate) (310 aa).

Residues Lys-45, 69–73 (NSMGL), and Asn-128 contribute to the substrate site. 45–46 (KT) lines the FMN pocket. Asn-128 serves as a coordination point for FMN. The active-site Nucleophile is Cys-131. Lys-165 and Val-193 together coordinate FMN. Residue 194-195 (NS) participates in substrate binding. FMN-binding positions include Gly-220, 248–249 (GG), and 270–271 (GT).

It belongs to the dihydroorotate dehydrogenase family. Type 1 subfamily. As to quaternary structure, homodimer. Requires FMN as cofactor.

Its subcellular location is the cytoplasm. It catalyses the reaction (S)-dihydroorotate + fumarate = orotate + succinate. It participates in pyrimidine metabolism; UMP biosynthesis via de novo pathway. Functionally, catalyzes the conversion of dihydroorotate to orotate with fumarate as the electron acceptor. This is Putative dihydroorotate dehydrogenase A (fumarate) (pyrD) from Streptococcus agalactiae serotype Ia (strain ATCC 27591 / A909 / CDC SS700).